A 1073-amino-acid polypeptide reads, in one-letter code: Carbamoyl phosphate synthase large chain (1073 aa).

The segment at 1-399 (MPKREDIKKV…SLLKAFKSLD (399 aa)) is carboxyphosphate synthetic domain. Residues arginine 129, arginine 169, glycine 175, glycine 176, glutamate 208, valine 210, glutamate 215, glycine 241, valine 242, histidine 243, glutamine 284, and glutamate 296 each contribute to the ATP site. In terms of domain architecture, ATP-grasp 1 spans 133–325 (KETMLSIGEK…IARVTAKIAI (193 aa)). Mg(2+) contacts are provided by glutamine 284, glutamate 296, and asparagine 298. Mn(2+) is bound by residues glutamine 284, glutamate 296, and asparagine 298. The tract at residues 400–540 (IDNQLGIKRW…YSTYEDTCET (141 aa)) is oligomerization domain. The segment at 541-931 (NSTDKKKILI…YKAELAADNL (391 aa)) is carbamoyl phosphate synthetic domain. The ATP-grasp 2 domain occupies 672–863 (YLLMQELGIP…LAKIAAKVIA (192 aa)). Residues arginine 708, aspartate 747, leucine 749, glutamate 754, glycine 779, valine 780, histidine 781, serine 782, glutamine 822, and glutamate 834 each coordinate ATP. 3 residues coordinate Mg(2+): glutamine 822, glutamate 834, and asparagine 836. The Mn(2+) site is built by glutamine 822, glutamate 834, and asparagine 836. The MGS-like domain occupies 930 to 1071 (NLLPLTGKVF…NEYHKEMEQK (142 aa)). Residues 932–1073 (LPLTGKVFLS…YHKEMEQKEE (142 aa)) form an allosteric domain region.

It belongs to the CarB family. Composed of two chains; the small (or glutamine) chain promotes the hydrolysis of glutamine to ammonia, which is used by the large (or ammonia) chain to synthesize carbamoyl phosphate. Tetramer of heterodimers (alpha,beta)4. Mg(2+) is required as a cofactor. The cofactor is Mn(2+).

The catalysed reaction is hydrogencarbonate + L-glutamine + 2 ATP + H2O = carbamoyl phosphate + L-glutamate + 2 ADP + phosphate + 2 H(+). It carries out the reaction hydrogencarbonate + NH4(+) + 2 ATP = carbamoyl phosphate + 2 ADP + phosphate + 2 H(+). The protein operates within amino-acid biosynthesis; L-arginine biosynthesis; carbamoyl phosphate from bicarbonate: step 1/1. It participates in pyrimidine metabolism; UMP biosynthesis via de novo pathway; (S)-dihydroorotate from bicarbonate: step 1/3. Its function is as follows. Large subunit of the glutamine-dependent carbamoyl phosphate synthetase (CPSase). CPSase catalyzes the formation of carbamoyl phosphate from the ammonia moiety of glutamine, carbonate, and phosphate donated by ATP, constituting the first step of 2 biosynthetic pathways, one leading to arginine and/or urea and the other to pyrimidine nucleotides. The large subunit (synthetase) binds the substrates ammonia (free or transferred from glutamine from the small subunit), hydrogencarbonate and ATP and carries out an ATP-coupled ligase reaction, activating hydrogencarbonate by forming carboxy phosphate which reacts with ammonia to form carbamoyl phosphate. The chain is Carbamoyl phosphate synthase large chain from Methanosarcina mazei (strain ATCC BAA-159 / DSM 3647 / Goe1 / Go1 / JCM 11833 / OCM 88) (Methanosarcina frisia).